Reading from the N-terminus, the 392-residue chain is LL-diaminopimelate aminotransferase (392 aa).

The substrate site is built by Tyr15, Gly40, Lys104, Tyr128, and Asn178. Pyridoxal 5'-phosphate-binding positions include 103–104 (SK), Tyr128, Asn178, Tyr209, and 237–239 (SVS). Position 240 is an N6-(pyridoxal phosphate)lysine (Lys240). Position 248 (Arg248) interacts with pyridoxal 5'-phosphate. A substrate-binding site is contributed by Arg366.

The protein belongs to the class-I pyridoxal-phosphate-dependent aminotransferase family. LL-diaminopimelate aminotransferase subfamily. Homodimer. Pyridoxal 5'-phosphate serves as cofactor.

The enzyme catalyses (2S,6S)-2,6-diaminopimelate + 2-oxoglutarate = (S)-2,3,4,5-tetrahydrodipicolinate + L-glutamate + H2O + H(+). Its pathway is amino-acid biosynthesis; L-lysine biosynthesis via DAP pathway; LL-2,6-diaminopimelate from (S)-tetrahydrodipicolinate (aminotransferase route): step 1/1. In terms of biological role, involved in the synthesis of meso-diaminopimelate (m-DAP or DL-DAP), required for both lysine and peptidoglycan biosynthesis. Catalyzes the direct conversion of tetrahydrodipicolinate to LL-diaminopimelate. The protein is LL-diaminopimelate aminotransferase of Desulforudis audaxviator (strain MP104C).